The following is a 100-amino-acid chain: Urease subunit gamma (100 aa).

Belongs to the urease gamma subunit family. Heterotrimer of UreA (gamma), UreB (beta) and UreC (alpha) subunits. Three heterotrimers associate to form the active enzyme.

It is found in the cytoplasm. It carries out the reaction urea + 2 H2O + H(+) = hydrogencarbonate + 2 NH4(+). It functions in the pathway nitrogen metabolism; urea degradation; CO(2) and NH(3) from urea (urease route): step 1/1. The polypeptide is Urease subunit gamma (Acinetobacter baumannii (strain AB307-0294)).